Here is a 232-residue protein sequence, read N- to C-terminus: Vacuolar iron transporter homolog 1 (232 aa).

Over 1 to 59 (MAIDLGCHVGCASPETKQEETADPTAAPVVVDDVEAAAGGRRPGDGGGVNYVARAQWLR) the chain is Cytoplasmic. Residues 60-80 (AAVLGANDGLVSVASLMVGVG) traverse the membrane as a helical segment. Over 81 to 89 (AANGTRRAM) the chain is Vacuolar. Residues 90 to 110 (LVSGLAGLVAGACSMAIGEFV) traverse the membrane as a helical segment. The Cytoplasmic segment spans residues 111–148 (SVYAQCDIQAAQIERARGGKDADGGEEEEELPSPTMAA). A helical membrane pass occupies residues 149–169 (VASALSFAAGAALPLLAGGFV). Residues 170 to 175 (RPWAAR) are Vacuolar-facing. The chain crosses the membrane as a helical span at residues 176–196 (VAAVCAASSLGLAGFGVASAY). The Cytoplasmic portion of the chain corresponds to 197–208 (LGGAGVARSGVR). The chain crosses the membrane as a helical span at residues 209–229 (MLVGGWLAMAVTYGVLKLFGM). Residues 230 to 232 (HGV) lie on the Vacuolar side of the membrane.

This sequence belongs to the CCC1 family.

It is found in the vacuole membrane. It catalyses the reaction Fe(2+)(in) = Fe(2+)(out). Functionally, probable vacuolar iron transporter that may be involved in the regulation of iron distribution throughout the plant. The protein is Vacuolar iron transporter homolog 1 of Oryza sativa subsp. japonica (Rice).